The sequence spans 295 residues: uncharacterized protein (295 aa).

The region spanning 2 to 226 (LSIESLCKSY…QQTNVFTLSV (225 aa)) is the ABC transporter domain. Residue 34 to 41 (GPNGAGKT) participates in ATP binding.

This sequence belongs to the ABC transporter superfamily.

This is an uncharacterized protein from Bacillus subtilis (strain 168).